A 244-amino-acid chain; its full sequence is Phosphoribosylaminoimidazole-succinocarboxamide synthase (244 aa).

This sequence belongs to the SAICAR synthetase family.

The enzyme catalyses 5-amino-1-(5-phospho-D-ribosyl)imidazole-4-carboxylate + L-aspartate + ATP = (2S)-2-[5-amino-1-(5-phospho-beta-D-ribosyl)imidazole-4-carboxamido]succinate + ADP + phosphate + 2 H(+). It functions in the pathway purine metabolism; IMP biosynthesis via de novo pathway; 5-amino-1-(5-phospho-D-ribosyl)imidazole-4-carboxamide from 5-amino-1-(5-phospho-D-ribosyl)imidazole-4-carboxylate: step 1/2. This is Phosphoribosylaminoimidazole-succinocarboxamide synthase from Prochlorococcus marinus (strain SARG / CCMP1375 / SS120).